A 156-amino-acid polypeptide reads, in one-letter code: Probable cyclic pyranopterin monophosphate synthase (156 aa).

Residues 74–76 and 110–111 each bind substrate; these read LCH and ME. Aspartate 125 is a catalytic residue.

Belongs to the MoaC family. As to quaternary structure, homohexamer; trimer of dimers.

It carries out the reaction (8S)-3',8-cyclo-7,8-dihydroguanosine 5'-triphosphate = cyclic pyranopterin phosphate + diphosphate. Its pathway is cofactor biosynthesis; molybdopterin biosynthesis. Catalyzes the conversion of (8S)-3',8-cyclo-7,8-dihydroguanosine 5'-triphosphate to cyclic pyranopterin monophosphate (cPMP). The polypeptide is Probable cyclic pyranopterin monophosphate synthase (Thermococcus onnurineus (strain NA1)).